The sequence spans 136 residues: Small ribosomal subunit protein uS8 (136 aa).

Belongs to the universal ribosomal protein uS8 family. As to quaternary structure, part of the 30S ribosomal subunit. Contacts proteins S5 and S12.

One of the primary rRNA binding proteins, it binds directly to 16S rRNA central domain where it helps coordinate assembly of the platform of the 30S subunit. This chain is Small ribosomal subunit protein uS8, found in Persephonella marina (strain DSM 14350 / EX-H1).